A 368-amino-acid polypeptide reads, in one-letter code: MFYYLYDLYFNHLDSLRIFSYVTFRALMAGLTSMLVTFWFGHKIIDFLYGLKFRESVRDDGPKSHEIKKGTPTMGGLLIIGSLLISVLLWGNLKNPNVILLSVFSLSFSVLGFADDYMKSVKKIKGGMRARTKFILSILISFIFCILFFYYTGTTGQTGKISFQLTDLFFPFIKGPVIALGIIAIPFSILVIIGSSHAVNLTDGLDGLATGTVLISVMTLGVIAYFSGTPIVANYLNIPYLPGAHEYSVFLSALTGALFGFLWFNAHPAQVFMGDTGSLFLGATLGMIVILLKKEILLLILGAIFVSEALSVILQVGSFKLTGKRIFKMAPLHHHFELGGLKETKIVIRFWIIAVILAIISLSTLKIQ.

The next 10 helical transmembrane spans lie at 31 to 51 (LTSM…LYGL), 73 to 93 (TMGG…WGNL), 98 to 118 (VILL…DDYM), 134 to 154 (FILS…YTGT), 175 to 195 (GPVI…IIGS), 213 to 233 (VLIS…PIVA), 249 to 269 (VFLS…AHPA), 271 to 291 (VFMG…IVIL), 296 to 316 (ILLL…ILQV), and 345 to 365 (KIVI…LSTL).

The protein belongs to the glycosyltransferase 4 family. MraY subfamily. The cofactor is Mg(2+).

The protein resides in the cell inner membrane. The catalysed reaction is UDP-N-acetyl-alpha-D-muramoyl-L-alanyl-gamma-D-glutamyl-meso-2,6-diaminopimeloyl-D-alanyl-D-alanine + di-trans,octa-cis-undecaprenyl phosphate = di-trans,octa-cis-undecaprenyl diphospho-N-acetyl-alpha-D-muramoyl-L-alanyl-D-glutamyl-meso-2,6-diaminopimeloyl-D-alanyl-D-alanine + UMP. Its pathway is cell wall biogenesis; peptidoglycan biosynthesis. In terms of biological role, catalyzes the initial step of the lipid cycle reactions in the biosynthesis of the cell wall peptidoglycan: transfers peptidoglycan precursor phospho-MurNAc-pentapeptide from UDP-MurNAc-pentapeptide onto the lipid carrier undecaprenyl phosphate, yielding undecaprenyl-pyrophosphoryl-MurNAc-pentapeptide, known as lipid I. The protein is Phospho-N-acetylmuramoyl-pentapeptide-transferase of Leptospira interrogans serogroup Icterohaemorrhagiae serovar copenhageni (strain Fiocruz L1-130).